The sequence spans 135 residues: Nucleoside diphosphate kinase (135 aa).

K11, F59, R87, T93, R104, and N114 together coordinate ATP. The active-site Pros-phosphohistidine intermediate is H117.

It belongs to the NDK family. In terms of assembly, homotetramer. Requires Mg(2+) as cofactor.

It localises to the cytoplasm. The enzyme catalyses a 2'-deoxyribonucleoside 5'-diphosphate + ATP = a 2'-deoxyribonucleoside 5'-triphosphate + ADP. It catalyses the reaction a ribonucleoside 5'-diphosphate + ATP = a ribonucleoside 5'-triphosphate + ADP. Functionally, major role in the synthesis of nucleoside triphosphates other than ATP. The ATP gamma phosphate is transferred to the NDP beta phosphate via a ping-pong mechanism, using a phosphorylated active-site intermediate. In Marinomonas sp. (strain MWYL1), this protein is Nucleoside diphosphate kinase.